Here is a 328-residue protein sequence, read N- to C-terminus: MIEKIWSGESPLWRLLLPLSWLYGLVSGAIRLCYKLKLKRAWRAPVPVVVVGNLTAGGNGKTPVVVWLVEQLQQRGIRVGVVSRGYGGKAESYPLLLSADTTTAQAGDEPVLIYQRTGAPVAVSPVRSDAVKAILAQHPDVQIIVTDDGLQHYRLARDVEIVVIDGVRRFGNGWWLPAGPMRERAGRLKSVDAVIVNGGVPRSGEIPMHLLPGQAVNLRTGTRCDVAQLEHVVAIAGIGHPPRFFATLKMCGVQPEKCVPLADHQSLNHADVSALVSAGQTLVMTEKDAVKCRAFAEENWWYLPVDAQLSGDEPAKLLAQLTSLASGH.

55–62 is an ATP binding site; sequence TAGGNGKT.

Belongs to the LpxK family.

It catalyses the reaction a lipid A disaccharide + ATP = a lipid IVA + ADP + H(+). It participates in glycolipid biosynthesis; lipid IV(A) biosynthesis; lipid IV(A) from (3R)-3-hydroxytetradecanoyl-[acyl-carrier-protein] and UDP-N-acetyl-alpha-D-glucosamine: step 6/6. Its function is as follows. Transfers the gamma-phosphate of ATP to the 4'-position of a tetraacyldisaccharide 1-phosphate intermediate (termed DS-1-P) to form tetraacyldisaccharide 1,4'-bis-phosphate (lipid IVA). This Escherichia coli O45:K1 (strain S88 / ExPEC) protein is Tetraacyldisaccharide 4'-kinase.